Here is a 405-residue protein sequence, read N- to C-terminus: Tryptophan synthase beta chain (405 aa).

Residue K96 is modified to N6-(pyridoxal phosphate)lysine.

It belongs to the TrpB family. Tetramer of two alpha and two beta chains. Pyridoxal 5'-phosphate serves as cofactor.

The catalysed reaction is (1S,2R)-1-C-(indol-3-yl)glycerol 3-phosphate + L-serine = D-glyceraldehyde 3-phosphate + L-tryptophan + H2O. It participates in amino-acid biosynthesis; L-tryptophan biosynthesis; L-tryptophan from chorismate: step 5/5. In terms of biological role, the beta subunit is responsible for the synthesis of L-tryptophan from indole and L-serine. The protein is Tryptophan synthase beta chain of Clostridium botulinum (strain Eklund 17B / Type B).